A 475-amino-acid polypeptide reads, in one-letter code: MHFETVIGLEVHVELKTDSKMFSPAPAHFGAKPNSNTNVIDLAYPGVLPVVNRRAVDWAMRASMALNMEIATESKFDRKNYFYPDNPKAYQISQFDQPIGENGYIDIEVDGETKRIGITRLHMEEDAGKSTHKDGYSLVDLNRQGTPLIEIVSEPDIRSPQEAYAYLEKLRSIIQYTGVSDCKMEEGSLRCDANISLRPYGQEEFGTKAELKNLNSFTYVRKGLEYEEKRQEEELLNGGEILQETRRFDESNGKTLLMRVKEGSDDYRYFPEPDIVPLYVDEEWKERVRQTIPELPDERKEKYVNQYGLPAYDAHVLTLTKEMSDFFEGAVAEGADVKLTSNWLMGGVNEYLNKNQIDLLDTKLTPENLAGMIKLIEDGTMSSKIAKKVFPELAENGGDAKQIMEDKGLVQISDEATLLKFVNEALDNNEQSIEDYKNGKGKAMGFLVGQIMKASKGQANPQLVNQLLKQELDKR.

The protein belongs to the GatB/GatE family. GatB subfamily. As to quaternary structure, heterotrimer of A, B and C subunits.

The enzyme catalyses L-glutamyl-tRNA(Gln) + L-glutamine + ATP + H2O = L-glutaminyl-tRNA(Gln) + L-glutamate + ADP + phosphate + H(+). It catalyses the reaction L-aspartyl-tRNA(Asn) + L-glutamine + ATP + H2O = L-asparaginyl-tRNA(Asn) + L-glutamate + ADP + phosphate + 2 H(+). Allows the formation of correctly charged Asn-tRNA(Asn) or Gln-tRNA(Gln) through the transamidation of misacylated Asp-tRNA(Asn) or Glu-tRNA(Gln) in organisms which lack either or both of asparaginyl-tRNA or glutaminyl-tRNA synthetases. The reaction takes place in the presence of glutamine and ATP through an activated phospho-Asp-tRNA(Asn) or phospho-Glu-tRNA(Gln). In Staphylococcus saprophyticus subsp. saprophyticus (strain ATCC 15305 / DSM 20229 / NCIMB 8711 / NCTC 7292 / S-41), this protein is Aspartyl/glutamyl-tRNA(Asn/Gln) amidotransferase subunit B.